We begin with the raw amino-acid sequence, 358 residues long: Magnesium-protoporphyrin IX monomethyl ester [oxidative] cyclase (358 aa).

The protein belongs to the AcsF family. It depends on Fe cation as a cofactor.

It carries out the reaction Mg-protoporphyrin IX 13-monomethyl ester + 3 NADPH + 3 O2 + 2 H(+) = 3,8-divinyl protochlorophyllide a + 3 NADP(+) + 5 H2O. Its pathway is porphyrin-containing compound metabolism; chlorophyll biosynthesis (light-independent). Catalyzes the formation of the isocyclic ring in chlorophyll biosynthesis. Mediates the cyclase reaction, which results in the formation of divinylprotochlorophyllide (Pchlide) characteristic of all chlorophylls from magnesium-protoporphyrin IX 13-monomethyl ester (MgPMME). The chain is Magnesium-protoporphyrin IX monomethyl ester [oxidative] cyclase from Trichodesmium erythraeum (strain IMS101).